A 143-amino-acid chain; its full sequence is uncharacterized protein (143 aa).

A run of 2 helical transmembrane segments spans residues 16-36 and 48-68; these read LIFA…IFVW and ICYI…FIYV. Asparagine 71 carries an N-linked (GlcNAc...) asparagine; by host glycan.

It is found in the membrane. This is an uncharacterized protein from Acanthamoeba polyphaga (Amoeba).